The sequence spans 220 residues: Large ribosomal subunit protein uL3 (220 aa).

Residues 145–169 (GPASHGSKFHRRPGSSGNRTWPGRV) form a disordered region.

Belongs to the universal ribosomal protein uL3 family. As to quaternary structure, part of the 50S ribosomal subunit. Forms a cluster with proteins L14 and L19.

Its function is as follows. One of the primary rRNA binding proteins, it binds directly near the 3'-end of the 23S rRNA, where it nucleates assembly of the 50S subunit. The protein is Large ribosomal subunit protein uL3 of Bdellovibrio bacteriovorus (strain ATCC 15356 / DSM 50701 / NCIMB 9529 / HD100).